Reading from the N-terminus, the 177-residue chain is Protein C (177 aa).

The span at 1 to 10 (MSTKAWNASR) shows a compositional bias: polar residues. Residues 1 to 37 (MSTKAWNASRLSGPDPSTPWSLKKPLQHGSRPPKGKR) form a disordered region.

Belongs to the morbillivirus protein C family.

The polypeptide is Protein C (P/V/C) (Bos indicus (Zebu)).